Here is a 456-residue protein sequence, read N- to C-terminus: 3-isopropylmalate dehydratase large subunit (456 aa).

Residues Cys-336, Cys-396, and Cys-399 each coordinate [4Fe-4S] cluster.

Belongs to the aconitase/IPM isomerase family. LeuC type 1 subfamily. In terms of assembly, heterodimer of LeuC and LeuD. [4Fe-4S] cluster is required as a cofactor.

It catalyses the reaction (2R,3S)-3-isopropylmalate = (2S)-2-isopropylmalate. It functions in the pathway amino-acid biosynthesis; L-leucine biosynthesis; L-leucine from 3-methyl-2-oxobutanoate: step 2/4. In terms of biological role, catalyzes the isomerization between 2-isopropylmalate and 3-isopropylmalate, via the formation of 2-isopropylmaleate. The polypeptide is 3-isopropylmalate dehydratase large subunit (Staphylococcus saprophyticus subsp. saprophyticus (strain ATCC 15305 / DSM 20229 / NCIMB 8711 / NCTC 7292 / S-41)).